Consider the following 342-residue polypeptide: MDLIYIPEDLSSCPKFGNKSCPPTNRSFRVRLIMYLLMTGAMVITIFGNLVIIISISHFKQLHSPTNFLILSMATTDFLLGFVIMPYSMVRSVESCWYFGDSFCKFHASFDMMLSLTSIFHLCSIAIDRFYAVCAPLHYTTTMTASMIKRLLFFCWAAPALFSFGLVLSEANVSGMQSYEILIACFNFCALTFNKFWGTILFTTCFFTPGSIMVGIYGKIFIVSRRHARALGNMPENTKGAGRNLSKKKDRKAAKTLGIVMGVFLACWLPCFLAVLIDPYLDYSTPIIVLDLLVWLGYFNSTCNPLIHGFFYPWFRKALEHIVSGKIFRSNSDTANLFPEAH.

At 1–35 the chain is on the extracellular side; it reads MDLIYIPEDLSSCPKFGNKSCPPTNRSFRVRLIMY. N-linked (GlcNAc...) asparagine glycosylation is found at asparagine 18 and asparagine 25. 2 disulfide bridges follow: cysteine 21-cysteine 185 and cysteine 104-cysteine 189. The chain crosses the membrane as a helical span at residues 36–56; it reads LLMTGAMVITIFGNLVIIISI. The Cytoplasmic portion of the chain corresponds to 57–68; the sequence is SHFKQLHSPTNF. A helical membrane pass occupies residues 69-89; that stretch reads LILSMATTDFLLGFVIMPYSM. Residues 90–150 lie on the Extracellular side of the membrane; the sequence is VRSVESCWYF…TTMTASMIKR (61 aa). A helical transmembrane segment spans residues 151–168; that stretch reads LLFFCWAAPALFSFGLVL. Over 169-172 the chain is Cytoplasmic; sequence SEAN. The tract at residues 173–186 is extracellular Loop 2 (ECL2); that stretch reads VSGMQSYEILIACF. A helical membrane pass occupies residues 173–193; sequence VSGMQSYEILIACFNFCALTF. At 194–198 the chain is on the extracellular side; the sequence is NKFWG. A helical membrane pass occupies residues 199 to 223; that stretch reads TILFTTCFFTPGSIMVGIYGKIFIV. Residues 224–256 lie on the Cytoplasmic side of the membrane; that stretch reads SRRHARALGNMPENTKGAGRNLSKKKDRKAAKT. Residues 257–277 traverse the membrane as a helical segment; that stretch reads LGIVMGVFLACWLPCFLAVLI. Over 278–286 the chain is Extracellular; it reads DPYLDYSTP. Residues 287-307 form a helical membrane-spanning segment; that stretch reads IIVLDLLVWLGYFNSTCNPLI. The Cytoplasmic segment spans residues 308–342; the sequence is HGFFYPWFRKALEHIVSGKIFRSNSDTANLFPEAH.

It belongs to the G-protein coupled receptor 1 family.

It localises to the cell membrane. In terms of biological role, olfactory receptor activated by several primary trace amines, including isoamylamine. Activated by isoamylamine and cyclohexylamine, but not to the corresponding alcohols, isoamylalcohol and cyclohexanol. This receptor is probably mediated by the G(s)-class of G-proteins which activate adenylate cyclase. The protein is Trace amine-associated receptor 3 (Taar3) of Rattus norvegicus (Rat).